We begin with the raw amino-acid sequence, 329 residues long: D-lactate dehydrogenase (329 aa).

NAD(+) is bound by residues 154 to 155, Asp174, 205 to 206, Asn211, 232 to 234, and Asp258; these read KI, CP, and TSR. Arg234 is a catalytic residue. Glu263 is a catalytic residue. His295 functions as the Proton donor in the catalytic mechanism.

Belongs to the D-isomer specific 2-hydroxyacid dehydrogenase family.

It catalyses the reaction (R)-lactate + NAD(+) = pyruvate + NADH + H(+). Fermentative lactate dehydrogenase. In Escherichia coli (strain K12), this protein is D-lactate dehydrogenase (ldhA).